Reading from the N-terminus, the 137-residue chain is 6,7-dimethyl-8-ribityllumazine synthase (137 aa).

Residues phenylalanine 11, serine 43–aspartate 45, and cysteine 67–isoleucine 69 contribute to the 5-amino-6-(D-ribitylamino)uracil site. Residue aspartate 72–threonine 73 coordinates (2S)-2-hydroxy-3-oxobutyl phosphate. Histidine 75 functions as the Proton donor in the catalytic mechanism. Leucine 100 is a 5-amino-6-(D-ribitylamino)uracil binding site. Arginine 115 is a binding site for (2S)-2-hydroxy-3-oxobutyl phosphate.

It belongs to the DMRL synthase family. In terms of assembly, forms an icosahedral capsid composed of 60 subunits, arranged as a dodecamer of pentamers.

It catalyses the reaction (2S)-2-hydroxy-3-oxobutyl phosphate + 5-amino-6-(D-ribitylamino)uracil = 6,7-dimethyl-8-(1-D-ribityl)lumazine + phosphate + 2 H2O + H(+). It participates in cofactor biosynthesis; riboflavin biosynthesis; riboflavin from 2-hydroxy-3-oxobutyl phosphate and 5-amino-6-(D-ribitylamino)uracil: step 1/2. Catalyzes the formation of 6,7-dimethyl-8-ribityllumazine by condensation of 5-amino-6-(D-ribitylamino)uracil with 3,4-dihydroxy-2-butanone 4-phosphate. This is the penultimate step in the biosynthesis of riboflavin. The sequence is that of 6,7-dimethyl-8-ribityllumazine synthase from Methanococcus maripaludis (strain DSM 14266 / JCM 13030 / NBRC 101832 / S2 / LL).